The sequence spans 326 residues: Chain length determinant protein (326 aa).

At 1–31 (MRVENNNVSGQNHDPEQIDLIDLLVQLWRGK) the chain is on the cytoplasmic side. The chain crosses the membrane as a helical span at residues 32-52 (MTIIISVIVAIALAIGYLAVA). The Periplasmic segment spans residues 53-295 (KEKWTSTAII…LPIRRDSPKK (243 aa)). Residues 296–316 (AITLILAVLLGGMVGAGIVLG) traverse the membrane as a helical segment. Residues 317-326 (RNALRNYNAK) are Cytoplasmic-facing.

It belongs to the WzzB/Cld/Rol family. In terms of assembly, homodimer.

The protein localises to the cell inner membrane. It functions in the pathway bacterial outer membrane biogenesis; lipopolysaccharide biosynthesis. Its function is as follows. Confers a modal distribution of chain length on the O-antigen component of lipopolysaccharide (LPS). Gives rise to a reduced number of short chain molecules and increases in numbers of longer molecules. The polypeptide is Chain length determinant protein (wzzB) (Escherichia coli (strain K12)).